A 142-amino-acid chain; its full sequence is Large ribosomal subunit protein bL17 (142 aa).

Belongs to the bacterial ribosomal protein bL17 family. Part of the 50S ribosomal subunit. Contacts protein L32.

In Bartonella henselae (strain ATCC 49882 / DSM 28221 / CCUG 30454 / Houston 1) (Rochalimaea henselae), this protein is Large ribosomal subunit protein bL17.